Reading from the N-terminus, the 217-residue chain is 25 kDa ookinete surface antigen (217 aa).

The first 16 residues, 1-16 (MNKLYSLFLFLFIQLS), serve as a signal peptide directing secretion. The EGF-like 1; truncated domain maps to 30 to 59 (CKKGFLIQMSGHLECKCENDLVLVNEETCE). EGF-like domains are found at residues 61 to 106 (KVLK…NVCI), 106 to 150 (ILNE…NKCS), and 153 to 193 (GETK…STCT). Disulfide bonds link Cys-65–Cys-80, Cys-74–Cys-92, Cys-94–Cys-105, Cys-110–Cys-120, Cys-115–Cys-133, Cys-135–Cys-149, Cys-157–Cys-168, Cys-161–Cys-177, and Cys-179–Cys-192. Asn-112 carries N-linked (GlcNAc...) asparagine glycosylation. Residues Asn-165 and Asn-187 are each glycosylated (N-linked (GlcNAc...) asparagine). Ser-196 is lipidated: GPI-anchor amidated serine. Residues 197-217 (VYNILNLSLIFVLFSVCFFIM) constitute a propeptide, removed in mature form. Residue Asn-202 is glycosylated (N-linked (GlcNAc...) asparagine).

The protein localises to the cell membrane. The protein is 25 kDa ookinete surface antigen of Plasmodium reichenowi.